The chain runs to 141 residues: Lutropin subunit beta (141 aa).

The signal sequence occupies residues 1–20 (MEMLQGLLLLLLLSMGGAWA). Cystine bridges form between Cys29/Cys77, Cys43/Cys92, Cys46/Cys130, Cys54/Cys108, Cys58/Cys110, and Cys113/Cys120. N-linked (GlcNAc...) asparagine glycans are attached at residues Asn33 and Asn50.

Belongs to the glycoprotein hormones subunit beta family. As to quaternary structure, heterodimer of a common alpha chain and a unique beta chain which confers biological specificity to thyrotropin, lutropin, follitropin and gonadotropin.

Its subcellular location is the secreted. Promotes spermatogenesis and ovulation by stimulating the testes and ovaries to synthesize steroids. The chain is Lutropin subunit beta (LHB) from Gorilla gorilla gorilla (Western lowland gorilla).